The chain runs to 482 residues: MENKIEVNNKDEMNRWFEEFKKGNGLVDTFTNSYSFCESVPNLDRFVFQMASATDDAQKDSIYASALVEATKFCAPIYECAWVSSTGIVKKGLEWFEKNAGTIKSWDESYTELKVDVPKIEQLTGYQQAALKWRKDIGFRVNANTAALSNKVLAEYKVPGEIVMSVKEMLSDMIRRRNLILNRGGDENPRGPVSHEHVDWCREFVKGKYIMAFNPPWGDINKSGRSGIALVATGLAKLAETEGKGIFDEAKKTVEALNGYLDKHKDEVDRASADSMITNLLKHIAKAQELYKNSSALRAQSAQIDTAFSSYYWLYKAGVTPETFPTVSQFLFELGKQPRGTKKMKKALLSTPMKWGKKLYELFADDSFQQNRIYMHPAVLTAGRISEMGVCFGTIPVANPDDAAQGSGHTKSILNLRTNTETNNPCAKTIVKLFEVQKTGFNIQDMDIVASEHLLHQSLVGKQSPFQNAYNVKGNATSANII.

Residues 266–269 (DEVD) carry the DEVD motif.

The protein belongs to the nairovirus nucleocapsid protein family. As to quaternary structure, probable homooligomer; forms a double superhelical polymer. Monomer. Mn(2+) is required as a cofactor. Cleaved at the DEVD motif by host CASP3/caspase 3 in mammalian cells at 48 hours postinfection giving rise to cleavage products of about 30 kDa and 22 kDa that remain associated. Only the monomeric form is cleaved. Little or no cleavage in tick cells. Caspase cleavage reduces the viral polymerase activity. Caspase cleavage is not required for productive infection in mammalian or tick host cells.

Its subcellular location is the virion. Functionally, binds dsRNA and ssRNA and probably participates in the packaging of viral genome. In the dsRNA binding mode, the nucleocapsid protein specifically binds to the vRNA panhandle secondary structure formed at the termini of viral genome. Does not discriminate between viral and nonviral RNAs through ssRNA binding mode. Displays dsDNA endonuclease activity that is sequence non-specific. This chain is Nucleoprotein (N), found in Crimean-Congo hemorrhagic fever virus (strain Nigeria/IbAr10200/1970) (CCHFV).